A 507-amino-acid chain; its full sequence is Maturase K (507 aa).

Belongs to the intron maturase 2 family. MatK subfamily.

It localises to the plastid. It is found in the chloroplast. In terms of biological role, usually encoded in the trnK tRNA gene intron. Probably assists in splicing its own and other chloroplast group II introns. The sequence is that of Maturase K from Nymphaea alba (White water-lily).